A 210-amino-acid chain; its full sequence is Urease accessory protein UreF (210 aa).

The protein belongs to the UreF family. UreD, UreF and UreG form a complex that acts as a GTP-hydrolysis-dependent molecular chaperone, activating the urease apoprotein by helping to assemble the nickel containing metallocenter of UreC. The UreE protein probably delivers the nickel.

The protein localises to the cytoplasm. Functionally, required for maturation of urease via the functional incorporation of the urease nickel metallocenter. The polypeptide is Urease accessory protein UreF (Dinoroseobacter shibae (strain DSM 16493 / NCIMB 14021 / DFL 12)).